The chain runs to 319 residues: tRNA uridine(34) hydroxylase (319 aa).

Positions 127–221 (KQEDTVIIDA…YGKDPEVQGE (95 aa)) constitute a Rhodanese domain. The active-site Cysteine persulfide intermediate is C181.

It belongs to the TrhO family.

The enzyme catalyses uridine(34) in tRNA + AH2 + O2 = 5-hydroxyuridine(34) in tRNA + A + H2O. Functionally, catalyzes oxygen-dependent 5-hydroxyuridine (ho5U) modification at position 34 in tRNAs. This Bacillus cereus (strain B4264) protein is tRNA uridine(34) hydroxylase.